The following is a 175-amino-acid chain: NADH-quinone oxidoreductase subunit B (175 aa).

[4Fe-4S] cluster-binding residues include C54, C55, C119, and C149.

The protein belongs to the complex I 20 kDa subunit family. In terms of assembly, NDH-1 is composed of at least 14 different subunits, Nqo1 to Nqo14. The complex has a L-shaped structure, with the hydrophobic arm (subunits Nqo7, Nqo8, Nqo10 to Nqo14) embedded in the inner membrane and the hydrophilic peripheral arm (subunits Nqo1 to Nqo6, Nqo9) protruding into the bacterial cytoplasm. The hydrophilic domain contains all the redox centers. NADH-quinone oxidoreductase forms a supercomplex with ubiquinol-cytochrome c reductase complex (complex III or cytochrome b-c1 complex) and cytochrome c oxidase (complex IV), which stabilizes the NADH-quinone oxidoreductase complex. Requires [4Fe-4S] cluster as cofactor.

It localises to the cell inner membrane. The enzyme catalyses a quinone + NADH + 5 H(+)(in) = a quinol + NAD(+) + 4 H(+)(out). In terms of biological role, NDH-1 shuttles electrons from NADH, via FMN and iron-sulfur (Fe-S) centers, to quinones in the respiratory chain. The immediate electron acceptor for the enzyme in this species is believed to be ubiquinone. Couples the redox reaction to proton translocation (for every two electrons transferred, four hydrogen ions are translocated across the cytoplasmic membrane), and thus conserves the redox energy in a proton gradient. The sequence is that of NADH-quinone oxidoreductase subunit B from Paracoccus denitrificans (strain Pd 1222).